The chain runs to 784 residues: Toll-like receptor 2 (784 aa).

Residues 1–24 (MLRALWLFWILVAITVLFSKRCSA) form the signal peptide. Topologically, residues 25 to 587 (QESLSCDASG…ARPSVLECHQ (563 aa)) are extracellular. A disulfide bridge links cysteine 30 with cysteine 36. LRR repeat units follow at residues 54–77 (MKSL…ACAN), 78–101 (LQVL…SLGS), 102–125 (LEHL…PLSS), 126–150 (LKYL…NLTN), 151–175 (LQTL…GLTS), 176–199 (LNEL…SIRD), 200–223 (IHHL…ILSS), 224–250 (VRYL…VSSP), 251–278 (MKKL…YILE), 279–308 (LSEV…ELGK), 309–337 (VETV…LLEK), 338–361 (VKRI…HLKS), 362–388 (LEFL…AWPS), 389–414 (LQTL…TLKN), 415–437 (LTSL…WPEK), 438–457 (MRFL…CIPQ), 458–478 (TLEV…FLPR), 479–500 (LQEL…LFPV), and 501–524 (LLVM…SFPK). Asparagine 147 carries an N-linked (GlcNAc...) asparagine glycan. The cysteines at positions 353 and 382 are disulfide-linked. Asparagine 414 carries N-linked (GlcNAc...) asparagine glycosylation. The cysteines at positions 432 and 454 are disulfide-linked. N-linked (GlcNAc...) asparagine glycosylation is present at asparagine 442. Positions 525–576 (LETLEAGDNHFVCSCELLSFTMETPALAQILVDWPDSYLCDSPPRLHGHRLQ) constitute an LRRCT domain. A helical membrane pass occupies residues 588–608 (AALVSGVCCALLLLILLVGAL). Topologically, residues 609–784 (CHHFHGLWYL…WVNLRTAIKS (176 aa)) are cytoplasmic. The 144-residue stretch at 639 to 782 (VCYDAFVSYS…VFWVNLRTAI (144 aa)) folds into the TIR domain. Lysine 754 participates in a covalent cross-link: Glycyl lysine isopeptide (Lys-Gly) (interchain with G-Cter in ubiquitin). Residues 761–778 (YLEWPLDEGQQEVFWVNL) carry the ATG16L1-binding motif motif.

The protein belongs to the Toll-like receptor family. In terms of assembly, interacts with LY96, TLR1 and TLR6 (via extracellular domain). TLR2 seems to exist in heterodimers with either TLR1 or TLR6 before stimulation by the ligand. The heterodimers form bigger oligomers in response to their corresponding ligands as well as further heterotypic associations with other receptors such as CD14 and/or CD36. Binds MYD88 (via TIR domain). Interacts with TICAM1. Interacts with CNPY3. Interacts with ATG16L1. Interacts with non-modified M.tuberculosis protein MPT83. Interacts with PPP1R11. Interacts with TIRAP. (Microbial infection) Interacts with Staphylococcus aureus protein SSL3; this interaction inhibits TLR2-mediated cytokine production. As to quaternary structure, (Microbial infection) Interacts with Toxoplasma gondii micronemal protein 1 (MIC1); the interaction promotes activation of bone marrow-derived dendritic cells and macrophages. Interacts with Toxoplasma gondii micronemal protein 4 (MIC4); the interaction promotes activation of bone marrow-derived dendritic cells and macrophages. Ubiquitinated at Lys-754 by PPP1R11, leading to its degradation. Deubiquitinated by USP2. In terms of processing, glycosylation of Asn-442 is critical for secretion of the N-terminal ectodomain of TLR2. As to expression, detected in a macrophage cell line, smooth muscle, lung, spleen, thymus, brain and adipose tissue. Cell surface expression detected in lung alveolar macrophages, dendritic macrophages and at lower levels in lung macrophages (at protein level).

The protein localises to the cell membrane. It localises to the cytoplasmic vesicle. Its subcellular location is the phagosome membrane. The protein resides in the membrane raft. Functionally, cooperates with LY96 to mediate the innate immune response to bacterial lipoproteins and other microbial cell wall components. Cooperates with TLR1 or TLR6 to mediate the innate immune response to bacterial lipoproteins or lipopeptides. Acts via MYD88 and TRAF6, leading to NF-kappa-B activation, cytokine secretion and the inflammatory response. May also promote apoptosis in response to lipoproteins. Forms activation clusters composed of several receptors depending on the ligand, these clusters trigger signaling from the cell surface and subsequently are targeted to the Golgi in a lipid-raft dependent pathway. Forms the cluster TLR2:TLR6:CD14:CD36 in response to diacylated lipopeptides and TLR2:TLR1:CD14 in response to triacylated lipopeptides. Recognizes M.tuberculosis major T-antigen EsxA (ESAT-6) which inhibits downstream MYD88-dependent signaling. Acts as the major receptor for M.tuberculosis lipoproteins LprA, LprG, LpqH and PhoS1 (pstS1), in conjunction with TLR1 and for some but not all lipoproteins CD14 and/or CD36. The lipoproteins act as agonists to modulate antigen presenting cell functions in response to the pathogen. Recombinant MPT83 from M.tuberculosis stimulates secretion of cytokines (TNF-alpha, IL-6 and IL-12p40) by mouse macrophage cell lines in a TLR2-dependent fashion, which leads to increased host innate immunity responses against the bacterium. Lung macrophages which express low levels of TLR2 respond poorly to stimulation by M.tuberculosis LpqH. Required for normal uptake of M.tuberculosis, a process that is inhibited by M.tuberculosis LppM. Interacts with TICAM2. In terms of biological role, (Microbial infection) Mediates activation of bone marrow-derived dendritic cells and macrophages, and production of pro-inflammatory cytokines, such as IL12 (IL12B/IL12A), triggered by Toxoplasma gondii micronemal protein 4 (MIC4) and micronemal protein 1 (MIC1). This Mus musculus (Mouse) protein is Toll-like receptor 2 (Tlr2).